A 100-amino-acid polypeptide reads, in one-letter code: MAKKNMIQREIKRSKLAKKYYLKRLAIKDQLKEAGSFSDKMDLRQNSKEMPRNSAAVRGRNRCWLTGRSRGYYRDFGLSRHVFREMSHECLLPGVTKSSW.

The protein belongs to the universal ribosomal protein uS14 family. Part of the 30S ribosomal subunit.

It is found in the plastid. The protein resides in the chloroplast. Functionally, binds 16S rRNA, required for the assembly of 30S particles. This chain is Small ribosomal subunit protein uS14c, found in Pyropia yezoensis (Susabi-nori).